We begin with the raw amino-acid sequence, 463 residues long: UDP-glucosyltransferase A1 (463 aa).

Belongs to the UDP-glycosyltransferase family.

The enzyme catalyses 18-hydroxy-(9Z)-octadecenoate + UDP-alpha-D-glucose = (9Z)-18-hydroxyoctadec-9-enoate 18-O-beta-D-glucoside + UDP + H(+). The catalysed reaction is 17-hydroxy-(9Z)-octadecenoate + UDP-alpha-D-glucose = (9Z)-17-hydroxyoctadec-9-enoate 17-O-beta-D-glucoside + UDP + H(+). Catalyzes the first glycosylation step of sophorolipid biosynthesis, the coupling of glucose to a hydroxylated fatty acid to give rise to a glucolipid. Can glycosylate all hydroxyl fatty acids generated by cytochrome P450 monooxygenases CYP52M1, CYP52N1 and CYP52E3 into their corresponding glucolipids. Main products are 17-O- and 18-O-(beta-D-glucopyranosyl)-octadecenoic acids. The chain is UDP-glucosyltransferase A1 from Starmerella bombicola (Yeast).